The primary structure comprises 90 residues: Phenol 2-monooxygenase, stimulatory component DmpM (90 aa).

Belongs to the TmoD/XamoD family. In terms of assembly, active as a monomer. Formation of dimers inactivates the protein. The multicomponent enzyme phenol hydroxylase is formed by DmpL (P1 component), DmpM (P2 component), DmpN (P3 component), DmpO (P4 component) and DmpP (P5 component).

It carries out the reaction phenol + NADH + O2 + H(+) = catechol + NAD(+) + H2O. It functions in the pathway aromatic compound metabolism; phenol degradation. Functionally, part of a multicomponent enzyme which catalyzes the degradation of phenol and some of its methylated derivatives. DmpM is a regulatory subunit that stimulates the phenol hydroxylase activity of the complex. The steady-state rate of phenol hydroxylase turnover is dependent on the DmpM concentration, with a maximum observed rate at about 1.5 DmpM per oxygenase monomer. Higher concentrations of DmpM inhibit phenol hydroxylase activity. May act by altering the redox potential of the oxygenase. Required for growth on phenol and for in vitro phenol hydroxylase activity. The chain is Phenol 2-monooxygenase, stimulatory component DmpM from Pseudomonas sp. (strain CF600).